Consider the following 601-residue polypeptide: Elongation factor 4 (601 aa).

Positions 7–189 constitute a tr-type G domain; the sequence is RNIRNFSIIA…AIVHRIPPPK (183 aa). GTP is bound by residues 19–24 and 136–139; these read DHGKST and NKID.

It belongs to the TRAFAC class translation factor GTPase superfamily. Classic translation factor GTPase family. LepA subfamily.

It is found in the cell inner membrane. It carries out the reaction GTP + H2O = GDP + phosphate + H(+). In terms of biological role, required for accurate and efficient protein synthesis under certain stress conditions. May act as a fidelity factor of the translation reaction, by catalyzing a one-codon backward translocation of tRNAs on improperly translocated ribosomes. Back-translocation proceeds from a post-translocation (POST) complex to a pre-translocation (PRE) complex, thus giving elongation factor G a second chance to translocate the tRNAs correctly. Binds to ribosomes in a GTP-dependent manner. This Xanthomonas axonopodis pv. citri (strain 306) protein is Elongation factor 4.